A 374-amino-acid polypeptide reads, in one-letter code: Nucleosome assembly protein 1;1 (374 aa).

A coiled-coil region spans residues 26 to 80 (VNALKNKLQDITGKPTNVLECLSPNVRKRVEVLKEIQSQHDELEAKFYEERAVLE). The short motif at 47–62 (LSPNVRKRVEVLKEIQ) is the Nuclear export signal element. The Nuclear localization signal motif lies at 223–228 (KKKPKK). Residues 299–339 (AAEDDFADLEDDDDDDEEDDDDEDEEEEDDEDDEDEEDEDD) are compositionally biased toward acidic residues. Residues 299-374 (AAEDDFADLE…GERPPECKQQ (76 aa)) are disordered. Residues 343–355 (KKKSSAVRKRGVR) are compositionally biased toward basic residues. Residue cysteine 371 is modified to Cysteine methyl ester. Residue cysteine 371 is the site of S-farnesyl cysteine attachment. Positions 372-374 (KQQ) are cleaved as a propeptide — removed in mature form.

The protein belongs to the nucleosome assembly protein (NAP) family. Binds preferentially histones H4 and H1 in vitro. Interacts with CYCB1;1.

The protein resides in the nucleus. It is found in the cytoplasm. May modulate chromatin structure by regulation of nucleosome assembly/disassembly. Could function together with B-type cyclins in the regulation of microtubule dynamics. The protein is Nucleosome assembly protein 1;1 (NAP1;1) of Nicotiana tabacum (Common tobacco).